Here is a 139-residue protein sequence, read N- to C-terminus: Envelope glycoprotein N (139 aa).

At methionine 1 to valine 100 the chain is on the virion surface side. The chain crosses the membrane as a helical span at residues serine 101–valine 121. The Intravirion portion of the chain corresponds to phenylalanine 122–tyrosine 139.

Belongs to the herpesviridae glycoprotein N family. As to quaternary structure, interacts (via N-terminus) with gM (via N-terminus). The gM-gN heterodimer forms the gCII complex.

It is found in the virion membrane. Its subcellular location is the host membrane. It localises to the host Golgi apparatus. The protein localises to the host trans-Golgi network. Envelope glycoprotein necessary for proper maturation of gM and modulation of its membrane fusion activity. Also plays a critical role in virion morphogenesis. This is Envelope glycoprotein N from Mus musculus (Mouse).